The primary structure comprises 108 residues: Probable 4-amino-4-deoxy-L-arabinose-phosphoundecaprenol flippase subunit ArnE (108 aa).

Transmembrane regions (helical) follow at residues 36 to 56, 58 to 78, and 85 to 105; these read SLWL…LVLQ, LDVG…TLAG, and PVDV…FQLG.

Belongs to the ArnE family. Heterodimer of ArnE and ArnF.

It is found in the cell inner membrane. It functions in the pathway bacterial outer membrane biogenesis; lipopolysaccharide biosynthesis. In terms of biological role, translocates 4-amino-4-deoxy-L-arabinose-phosphoundecaprenol (alpha-L-Ara4N-phosphoundecaprenol) from the cytoplasmic to the periplasmic side of the inner membrane. This chain is Probable 4-amino-4-deoxy-L-arabinose-phosphoundecaprenol flippase subunit ArnE, found in Pseudomonas syringae pv. syringae (strain B728a).